Reading from the N-terminus, the 395-residue chain is MVMKREVVGYTTMSEHLIDTQLTRSPFFFASANQSMLGCGVAHAFQQAIPFAELANQAKQLLQQAKRDECDNPLLFGIVPFDPKTPTRFMIPRTLYVSSSPRLNRPAHLTRQVAKLISSPSGEQYKQGVSHLLNMFHHSGLSKVVLSRAIEIATEQEIALPTLLRSLLAINHHGYTFAASLDEQRKLIGASPELLVAKRGNYLISNPLAGSRPRSQDAQENAQRRASLLNTAKDLHEHGLVVEEVERIMSRYCRNLYTPMVPSVIETETMLHLSTLLEGQVSDPEVCALQVAADLHPTPAVCGFPRESAYQAIRELEEFDRGYFTGMVGWCDARGNGEWVVTIRCAEVGSHQMKLFAGAGIVDESLPQSELEETGAKMKTILAAAGIELNDVLTA.

It belongs to the isochorismate synthase family.

It carries out the reaction chorismate = isochorismate. It functions in the pathway siderophore biosynthesis; vibriobactin biosynthesis. The chain is Vibriobactin-specific isochorismate synthase (vibC) from Vibrio cholerae serotype O1 (strain ATCC 39315 / El Tor Inaba N16961).